Reading from the N-terminus, the 58-residue chain is Metallothionein-1 (58 aa).

A beta region spans residues 1-28; sequence PGPCCKDKCECAEGGCKTGCKCTSCRCA. A divalent metal cation-binding residues include C4, C5, C9, C11, C16, C20, C22, C25, C27, C30, C33, C37, C39, C45, C49, C53, C55, and C56. The tract at residues 29–58 is alpha; the sequence is PCEKCTSGCKCPSKDECAKTCSKPCSCCXX.

The protein belongs to the metallothionein superfamily. Type 3 family.

Functionally, metallothioneins have a high content of cysteine residues that bind various heavy metals. The different forms of lobster metallothioneins may have different biological functions. Class I MTS in marine crustacea are involved in the sequestration of elevated levels of heavy-metal ions. Binds 6 metal ions. Known to bind cadmium. The sequence is that of Metallothionein-1 from Homarus americanus (American lobster).